A 950-amino-acid polypeptide reads, in one-letter code: MSLTELFNRHEFLARHIGPSDAERAEMLAAVGAPSIDALVDQTLPADIRLNRRLDLPSPQPEAEALAALKAVASKNVVNKSFIGLGYYPVLTPTVILRNVLENPGWYTAYTPYQAEIAQGRLEALLNFQQMVIDLTGLEMANASLLDEATAAAEAMAMAGRVSKSKSTRFFVDSRVLPQTLDVMKTRAKYFGFELVQGHPEEAGNGDYFGALFQYPGEAGDLLDLTPHIAAVKAKGGVVAVAADVMALVALKSPAEMGADIALGNTQRFGVPMGFGGPHAAYFAFKDEMKRSAPGRIIGVSIDAKGKTALRMALQTREQHIRREKANSNICTSQVLLANIAGLYAVYHGAEGVRRIAARIHRLAAIFAHAVKEAGGKLVFDRFFDTVQVDAPKADAIYAAALAAGYNLRRVGKTVLGVAFHEAATESDLAKLIELFTGKPADIAALDAAALDAIPAALKRESAILTHPVFNTHHSEHEMLRYMKKLENRDLAMNHSMISLGSCTMKLNATSEMIPITWPEFANMHPFAPREQTVGYLELIEGLQKQLKAITGFDAISMQPNSGAQGEYAGLLAISRYHESRGEAHRNICLIPQSAHGTNPATAQMMNMQVVVVKCDEAGNVDVADLKAKAEQHAANLAALMITYPSTHGVFEQGIKEICEIVHAHGGQVYMDGANLNAQVGLTRPADIGADVSHMNLHKTFCIPHGGGGPGMGPIGLKAHLAPFIANHVVAPVPGAVEGQTAVSAAPFGSASILPISYMYIAMMGAEGMKQATENALLSANYLATRLSEHFPVLYTGANGRVAHECIIDLRPLKAASGVTEVDVAKRLMDYGFHAPTMSFPVPGTLMIEPTESEPKAELDRFIAAMAAIRAEIDRVQSGAWPADNNPLVNAPHSKADIAGDWDRPYSREQGLFPLPYVLENKFWPSVNRIDDVYGDRNVVCSCPSTESYM.

At lysine 699 the chain carries N6-(pyridoxal phosphate)lysine.

The protein belongs to the GcvP family. As to quaternary structure, the glycine cleavage system is composed of four proteins: P, T, L and H. Pyridoxal 5'-phosphate is required as a cofactor.

It carries out the reaction N(6)-[(R)-lipoyl]-L-lysyl-[glycine-cleavage complex H protein] + glycine + H(+) = N(6)-[(R)-S(8)-aminomethyldihydrolipoyl]-L-lysyl-[glycine-cleavage complex H protein] + CO2. Functionally, the glycine cleavage system catalyzes the degradation of glycine. The P protein binds the alpha-amino group of glycine through its pyridoxal phosphate cofactor; CO(2) is released and the remaining methylamine moiety is then transferred to the lipoamide cofactor of the H protein. This Chromobacterium violaceum (strain ATCC 12472 / DSM 30191 / JCM 1249 / CCUG 213 / NBRC 12614 / NCIMB 9131 / NCTC 9757 / MK) protein is Glycine dehydrogenase (decarboxylating).